Consider the following 159-residue polypeptide: 2-C-methyl-D-erythritol 2,4-cyclodiphosphate synthase (159 aa).

Aspartate 8 and histidine 10 together coordinate a divalent metal cation. Residues 8 to 10 (DVH) and 34 to 35 (HS) contribute to the 4-CDP-2-C-methyl-D-erythritol 2-phosphate site. Histidine 42 contributes to the a divalent metal cation binding site. 4-CDP-2-C-methyl-D-erythritol 2-phosphate is bound by residues 56–58 (DIG), 61–65 (FPDTD), 100–106 (AQAPKML), 132–135 (TTTE), phenylalanine 139, and arginine 142.

The protein belongs to the IspF family. In terms of assembly, homotrimer. It depends on a divalent metal cation as a cofactor.

The enzyme catalyses 4-CDP-2-C-methyl-D-erythritol 2-phosphate = 2-C-methyl-D-erythritol 2,4-cyclic diphosphate + CMP. Its pathway is isoprenoid biosynthesis; isopentenyl diphosphate biosynthesis via DXP pathway; isopentenyl diphosphate from 1-deoxy-D-xylulose 5-phosphate: step 4/6. Involved in the biosynthesis of isopentenyl diphosphate (IPP) and dimethylallyl diphosphate (DMAPP), two major building blocks of isoprenoid compounds. Catalyzes the conversion of 4-diphosphocytidyl-2-C-methyl-D-erythritol 2-phosphate (CDP-ME2P) to 2-C-methyl-D-erythritol 2,4-cyclodiphosphate (ME-CPP) with a corresponding release of cytidine 5-monophosphate (CMP). The sequence is that of 2-C-methyl-D-erythritol 2,4-cyclodiphosphate synthase from Citrobacter koseri (strain ATCC BAA-895 / CDC 4225-83 / SGSC4696).